Here is a 293-residue protein sequence, read N- to C-terminus: ATP synthase gamma chain (293 aa).

It belongs to the ATPase gamma chain family. As to quaternary structure, F-type ATPases have 2 components, CF(1) - the catalytic core - and CF(0) - the membrane proton channel. CF(1) has five subunits: alpha(3), beta(3), gamma(1), delta(1), epsilon(1). CF(0) has three main subunits: a, b and c.

The protein resides in the cell inner membrane. Functionally, produces ATP from ADP in the presence of a proton gradient across the membrane. The gamma chain is believed to be important in regulating ATPase activity and the flow of protons through the CF(0) complex. The polypeptide is ATP synthase gamma chain (Nitratidesulfovibrio vulgaris (strain DSM 19637 / Miyazaki F) (Desulfovibrio vulgaris)).